The sequence spans 61 residues: Photosystem II reaction center protein K (61 aa).

Residues Met1–Gly24 constitute a propeptide that is removed on maturation. Residues Ile36–Ala56 traverse the membrane as a helical segment.

The protein belongs to the PsbK family. As to quaternary structure, PSII is composed of 1 copy each of membrane proteins PsbA, PsbB, PsbC, PsbD, PsbE, PsbF, PsbH, PsbI, PsbJ, PsbK, PsbL, PsbM, PsbT, PsbX, PsbY, PsbZ, Psb30/Ycf12, at least 3 peripheral proteins of the oxygen-evolving complex and a large number of cofactors. It forms dimeric complexes.

It localises to the plastid. The protein resides in the chloroplast thylakoid membrane. Its function is as follows. One of the components of the core complex of photosystem II (PSII). PSII is a light-driven water:plastoquinone oxidoreductase that uses light energy to abstract electrons from H(2)O, generating O(2) and a proton gradient subsequently used for ATP formation. It consists of a core antenna complex that captures photons, and an electron transfer chain that converts photonic excitation into a charge separation. In Nicotiana tomentosiformis (Tobacco), this protein is Photosystem II reaction center protein K.